The primary structure comprises 375 residues: Phosphoglycerate kinase (375 aa).

Positions 1, 2, 3, 4, 17, 40, 41, 43, 44, 99, 100, 147, and 148 each coordinate (2R)-3-phosphoglycerate. Glycine 191 is a binding site for ADP. A CDP-binding site is contributed by glycine 191. 2 residues coordinate AMP: alanine 192 and lysine 193. Alanine 192 is a binding site for ATP. Alanine 192 contributes to the Mg(2+) binding site. Aspartate 196 is a binding site for CDP. Aspartate 196 is a binding site for Mg(2+). Lysine 197 is an AMP binding site. Position 197 (lysine 197) interacts with ATP. An ADP-binding site is contributed by glycine 215. Glycine 215 lines the CDP pocket. Positions 216 and 290 each coordinate AMP. Residues glycine 216 and glycine 290 each coordinate ATP. Glycine 315 and phenylalanine 320 together coordinate CDP. Phenylalanine 320 contacts ADP. An AMP-binding site is contributed by glutamate 321. Residues glutamate 321, aspartate 352, and threonine 353 each coordinate ATP. Aspartate 352 contributes to the Mg(2+) binding site.

Belongs to the phosphoglycerate kinase family. Monomer. It depends on Mg(2+) as a cofactor.

The catalysed reaction is (2R)-3-phosphoglycerate + ATP = (2R)-3-phospho-glyceroyl phosphate + ADP. The protein operates within carbohydrate degradation; glycolysis; pyruvate from D-glyceraldehyde 3-phosphate: step 2/5. This Tetrahymena pyriformis protein is Phosphoglycerate kinase (PGK).